We begin with the raw amino-acid sequence, 111 residues long: Large ribosomal subunit protein uL22 (111 aa).

Belongs to the universal ribosomal protein uL22 family. Part of the 50S ribosomal subunit.

Functionally, this protein binds specifically to 23S rRNA; its binding is stimulated by other ribosomal proteins, e.g. L4, L17, and L20. It is important during the early stages of 50S assembly. It makes multiple contacts with different domains of the 23S rRNA in the assembled 50S subunit and ribosome. The globular domain of the protein is located near the polypeptide exit tunnel on the outside of the subunit, while an extended beta-hairpin is found that lines the wall of the exit tunnel in the center of the 70S ribosome. This chain is Large ribosomal subunit protein uL22, found in Clostridium tetani (strain Massachusetts / E88).